The sequence spans 381 residues: Heterogeneous nuclear rnp K-like protein 2 (381 aa).

Positions 1 to 34 (MSQFFEAATPVAIPTNNTNGGSSDAGSAATGGAP) are disordered. The segment covering 15–33 (TNNTNGGSSDAGSAATGGA) has biased composition (low complexity). KH domains follow at residues 43-107 (TINH…IGDI), 156-221 (IGYV…LIEI), and 258-326 (NTRI…ESML). The interval 344–381 (LEAAEGDATVVTERSDSASFLEEKEEPQKNHDNKEEQS) is disordered. 3 positions are modified to phosphoserine: S358, S360, and S362. Over residues 369–381 (EPQKNHDNKEEQS) the composition is skewed to basic and acidic residues.

It belongs to the HEK2 family. In terms of assembly, binds RNA. Phosphorylated by the plasma membrane-Anchored casein kinase YCK1. Phosphorylation at its C-terminus reduces its RNA-binding capacity.

It localises to the cytoplasm. The protein localises to the P-body. It is found in the nucleus. The protein resides in the chromosome. Its subcellular location is the telomere. In terms of biological role, RNA-binding protein involved in the correct localization of transcripts in the cell. RNA localization is a widespread mechanism for achieving localized protein synthesis. Required for the asymmetric localization to the daughter cell nucleus of the ASH1 transcript, coding for a specific repressor of transcription. Overexpression inhibits translation of the ASH1 transcript. Involved in the stability of transcripts, like the MTL1 mRNA. Involved in structural and functional organization of telomeric chromatin and regulates silencing at the HMR locus. The polypeptide is Heterogeneous nuclear rnp K-like protein 2 (HEK2) (Saccharomyces cerevisiae (strain JAY291) (Baker's yeast)).